A 395-amino-acid chain; its full sequence is Putative pyridoxal phosphate-dependent acyltransferase (395 aa).

Gly-110–Phe-111 contributes to the pyridoxal 5'-phosphate binding site. His-135 provides a ligand contact to substrate. Pyridoxal 5'-phosphate contacts are provided by residues Ser-185, Asp-210–His-213, and Thr-240–Lys-243. The residue at position 243 (Lys-243) is an N6-(pyridoxal phosphate)lysine. Thr-357 lines the substrate pocket.

This sequence belongs to the class-II pyridoxal-phosphate-dependent aminotransferase family. Homodimer. The cofactor is pyridoxal 5'-phosphate.

This chain is Putative pyridoxal phosphate-dependent acyltransferase, found in Staphylococcus aureus (strain MRSA252).